The sequence spans 360 residues: DNA replication and repair protein RecF (360 aa).

An ATP-binding site is contributed by 30 to 37; that stretch reads GHNGSGKT.

The protein belongs to the RecF family.

The protein localises to the cytoplasm. Its function is as follows. The RecF protein is involved in DNA metabolism; it is required for DNA replication and normal SOS inducibility. RecF binds preferentially to single-stranded, linear DNA. It also seems to bind ATP. This chain is DNA replication and repair protein RecF, found in Haemophilus ducreyi (strain 35000HP / ATCC 700724).